A 365-amino-acid polypeptide reads, in one-letter code: Peptide chain release factor 2 (365 aa).

Residue Gln-252 is modified to N5-methylglutamine.

The protein belongs to the prokaryotic/mitochondrial release factor family. Methylated by PrmC. Methylation increases the termination efficiency of RF2.

The protein resides in the cytoplasm. In terms of biological role, peptide chain release factor 2 directs the termination of translation in response to the peptide chain termination codons UGA and UAA. In Proteus mirabilis (strain HI4320), this protein is Peptide chain release factor 2.